The chain runs to 628 residues: Chaperone protein HtpG (628 aa).

The interval 1-339 (MSNNQQTLGF…SNDLPLNVSR (339 aa)) is a; substrate-binding. The tract at residues 340 to 556 (EILQDNKTTA…NDQMTTQMAK (217 aa)) is b. The c stretch occupies residues 557-628 (LFAMSGQPVP…IKRVNTLLAG (72 aa)).

This sequence belongs to the heat shock protein 90 family. In terms of assembly, homodimer.

It is found in the cytoplasm. In terms of biological role, molecular chaperone. Has ATPase activity. The chain is Chaperone protein HtpG from Actinobacillus succinogenes (strain ATCC 55618 / DSM 22257 / CCUG 43843 / 130Z).